The primary structure comprises 273 residues: Cell division protein FtsQ (273 aa).

Residues 1 to 20 (MPPRKAHTTRRTPAKKSGVR) are Cytoplasmic-facing. The chain crosses the membrane as a helical span at residues 21-43 (RRLLRLLVTGVPVLALCGVAWLW). Residues 44 to 273 (LESVRLTRIE…STQKSAMGHE (230 aa)) lie on the Periplasmic side of the membrane. The POTRA domain occupies 47-115 (VRLTRIEIVG…GTLRIAVEER (69 aa)).

It belongs to the FtsQ/DivIB family. FtsQ subfamily.

The protein resides in the cell inner membrane. Its function is as follows. Essential cell division protein. This chain is Cell division protein FtsQ, found in Rhodothermus marinus (strain ATCC 43812 / DSM 4252 / R-10) (Rhodothermus obamensis).